Reading from the N-terminus, the 223-residue chain is DNA mismatch repair protein MutH (223 aa).

The protein belongs to the MutH family.

It is found in the cytoplasm. Sequence-specific endonuclease that cleaves unmethylated GATC sequences. It is involved in DNA mismatch repair. The polypeptide is DNA mismatch repair protein MutH (Shewanella sp. (strain W3-18-1)).